We begin with the raw amino-acid sequence, 315 residues long: CID domain-containing protein 1 (315 aa).

The region spanning 1–135 (MADFTEQTLR…RLHEVHQQVK (135 aa)) is the CID domain. A coiled-coil region spans residues 227-273 (MLEEYVKRLKNETNERETLESNLNMLIENVRMSIEHHEKLCREVKRR).

In Caenorhabditis elegans, this protein is CID domain-containing protein 1 (cids-1).